Here is a 154-residue protein sequence, read N- to C-terminus: Small ribosomal subunit protein uS15 (154 aa).

Positions 1–10 (MARMHSRRRG) are enriched in basic residues. Positions 1–32 (MARMHSRRRGSSGSDRPTADEPPEWSEVDEDA) are disordered. Residues 21–32 (EPPEWSEVDEDA) show a composition bias toward acidic residues.

It belongs to the universal ribosomal protein uS15 family. In terms of assembly, part of the 30S ribosomal subunit.

This chain is Small ribosomal subunit protein uS15, found in Natronomonas pharaonis (strain ATCC 35678 / DSM 2160 / CIP 103997 / JCM 8858 / NBRC 14720 / NCIMB 2260 / Gabara) (Halobacterium pharaonis).